The sequence spans 109 residues: RNA-binding protein Hfq (109 aa).

In terms of domain architecture, Sm spans 9–68; it reads DPFLNALRKEKVSVSVYLVNGIKLQGQVEAFDQFCIVLRNTVNQMVYKHAISTIVPAKSV. The interval 77–109 is disordered; that stretch reads PYHQNSNDEQDENVDDIHSDDLEIQENEGNIHE.

Belongs to the Hfq family. Homohexamer.

RNA chaperone that binds small regulatory RNA (sRNAs) and mRNAs to facilitate mRNA translational regulation in response to envelope stress, environmental stress and changes in metabolite concentrations. Also binds with high specificity to tRNAs. The chain is RNA-binding protein Hfq from Francisella tularensis subsp. holarctica (strain FTNF002-00 / FTA).